The following is a 245-amino-acid chain: Serine/arginine-rich splicing factor 1B (245 aa).

The RRM 1 domain occupies 15-90; sequence CRIYVGNLPP…YRLRVEFPRS (76 aa). Disordered stretches follow at residues 89 to 116 and 192 to 245; these read RSGR…PPSR and KVDG…RSRT. Residues 91–106 show a composition bias toward gly residues; the sequence is GRGGGRGGGGGGGVGA. The 75-residue stretch at 120–194 folds into the RRM 2 domain; sequence YRVIVSGLPP…ETAYIRVKVD (75 aa). Residues 204–245 are compositionally biased toward basic residues; sequence SRSRSRSRSRSRSNSRSRSYSPRRSRGSPRYSPRHSRSRSRT.

Belongs to the splicing factor SR family.

The protein localises to the cytoplasm. The protein resides in the nucleus speckle. Its function is as follows. May play a role in preventing exon skipping, ensuring the accuracy of splicing and regulating alternative splicing. In Danio rerio (Zebrafish), this protein is Serine/arginine-rich splicing factor 1B (srsf1b).